The following is a 203-amino-acid chain: Endo-type membrane-bound lytic murein transglycosylase A (203 aa).

The signal sequence occupies residues 1 to 15 (MKLRWFAFLIVLLAG). Cys-16 carries N-palmitoyl cysteine lipidation. A lipid anchor (S-diacylglycerol cysteine) is attached at Cys-16.

The protein belongs to the transglycosylase Slt family.

It is found in the cell outer membrane. It catalyses the reaction Endolytic cleavage of the (1-&gt;4)-beta-glycosidic linkage between N-acetylmuramic acid (MurNAc) and N-acetylglucosamine (GlcNAc) residues in peptidoglycan with concomitant formation of a 1,6-anhydrobond in the MurNAc residue.. Its function is as follows. Murein-degrading enzyme. May play a role in recycling of muropeptides during cell elongation and/or cell division. Preferentially cleaves at a distance of more than two disaccharide units from the ends of the glycan chain. This is Endo-type membrane-bound lytic murein transglycosylase A from Escherichia coli O1:K1 / APEC.